The following is a 671-amino-acid chain: Beta-galactosidase 1 (671 aa).

Positions 1-18 are cleaved as a signal peptide; that stretch reads MKLIVLIFFLLFINLNYC. The Proton donor role is filled by glutamate 200. The N-linked (GlcNAc...) asparagine glycan is linked to asparagine 228. Glutamate 288 serves as the catalytic Nucleophile. N-linked (GlcNAc...) asparagine glycosylation is found at asparagine 321, asparagine 391, asparagine 400, asparagine 499, asparagine 509, asparagine 564, and asparagine 595.

It belongs to the glycosyl hydrolase 35 family.

It localises to the lysosome. The catalysed reaction is Hydrolysis of terminal non-reducing beta-D-galactose residues in beta-D-galactosides.. Functionally, cleaves beta-linked terminal galactosyl residues from gangliosides, glycoproteins, and glycosaminoglycans. The protein is Beta-galactosidase 1 (glb1) of Dictyostelium discoideum (Social amoeba).